An 899-amino-acid chain; its full sequence is Alanine--tRNA ligase (899 aa).

Zn(2+) contacts are provided by histidine 595, histidine 599, cysteine 703, and histidine 707.

Belongs to the class-II aminoacyl-tRNA synthetase family. Zn(2+) is required as a cofactor.

It is found in the cytoplasm. It catalyses the reaction tRNA(Ala) + L-alanine + ATP = L-alanyl-tRNA(Ala) + AMP + diphosphate. Catalyzes the attachment of alanine to tRNA(Ala) in a two-step reaction: alanine is first activated by ATP to form Ala-AMP and then transferred to the acceptor end of tRNA(Ala). Also edits incorrectly charged Ser-tRNA(Ala) and Gly-tRNA(Ala) via its editing domain. The sequence is that of Alanine--tRNA ligase from Caldivirga maquilingensis (strain ATCC 700844 / DSM 13496 / JCM 10307 / IC-167).